A 702-amino-acid chain; its full sequence is Flagellar operon control protein UmoB (702 aa).

The next 5 helical transmembrane spans lie at 4–24, 204–224, 227–247, 343–363, and 656–676; these read SVII…FLFF, GFWN…ALMM, VFLP…LFLI, IIFV…QPLS, and GNTL…FFII.

It belongs to the IgaA family.

The protein resides in the cell inner membrane. In terms of biological role, up-regulator of flagellar flhDC master operon. The chain is Flagellar operon control protein UmoB (umoB) from Proteus mirabilis.